The following is a 659-amino-acid chain: MKLKLIFKTIYADKDKTDLFYCVSKGIIYNKIKNKIVYQLKYTEIPRYFNFNLEFESYQSNKIYQSNTNTYKNTIIGSIYNLVLYIDIHNLFCDRFRINNKVLKILCYYLIIIQIRQLKTNKSYNITKENLPFKINDIINNPIQLIPWNLFLLGKNITLDLKNIKLVTNKQIPKKKFQKTGCIFESNNIDKLTHELRKKITTKSLIIIPTGFPKLWTNCSSITYTTYIDLVQLNDNFENKFKNKKMIHNIIVHECYIQYIPIIKKLIQYFVDCKSIWIINSLPLKYYISNDNNTEGKFTIGNVFKLANIWANFSTNDKKSYKTEIIRFIMADFNKLYFKINFPTDDLPVQIISPNILELNIFNEFRKFHMDWLSKLNNDKNNIYSSTSKHKNNRIKSKIYDCVMVLSLSVINNNDITIFFKNKIQKTLDINCKISKKIEKMIDVYISARKTSHHKINEKTPVDFTKIVNSLTQKKDKINSVISNYNRYQKNGFYDSIKDNDCPVCYDDDYIKTKLICGHTVCLTCVLNILPNSKGCPLCMEPININKMAIIRESIGESNNYSEMLDLLFKNLSNETLILTNLEETHNIMLYRGFNVWLLKCSFIAKKINFLSKITTVIILSSPLNSINDSDKLDFEMFQEYIKLVNPNISIKRIQLNIY.

An RING-type zinc finger spans residues 502-540 (CPVCYDDDYIKTKLICGHTVCLTCVLNILPNSKGCPLCM).

The polypeptide is Putative RING finger protein R311 (Acanthamoeba polyphaga (Amoeba)).